Reading from the N-terminus, the 325-residue chain is Glutarate 2-hydroxylase (325 aa).

3 residues coordinate Fe cation: His160, Asp162, and His292.

The protein belongs to the glutarate hydroxylase family. As to quaternary structure, homotetramer. Requires Fe(2+) as cofactor.

The catalysed reaction is glutarate + 2-oxoglutarate + O2 = (S)-2-hydroxyglutarate + succinate + CO2. The protein operates within amino-acid degradation. Its function is as follows. Acts as an alpha-ketoglutarate-dependent dioxygenase catalyzing hydroxylation of glutarate (GA) to L-2-hydroxyglutarate (L2HG). Functions in a L-lysine degradation pathway that proceeds via cadaverine, glutarate and L-2-hydroxyglutarate. In Salmonella typhimurium (strain SL1344), this protein is Glutarate 2-hydroxylase.